A 333-amino-acid chain; its full sequence is MTQIKVDAIISKQFLAADLNEIRQMQEESKKQVIKMEIVWKNVALFVALHIGALVGLYQLVFQAKWATVGWVFLLHTLGSMGVTGGAHRLWAHRAYKATLSWRVFLMLINSIAFQNDIIDWARDHRCHHKWTDTDADPHSTNRGMFFAHMGWLLVKKHDQLKIQGGKLDLSDLYEDPVLMFQRKNYLPLVGIFCFALPTFIPVVLWGESAFIAFYTAALFRYCFTLHATWCINSVSHWVGWQPYDHQASSVDNLWTSIAAVGEGGHNYHHTFPQDYRTSEHAEFLNWTRVLIDFGASIGMVYDRKTTPEEVIQRQCKKFGCETEREKMLHKLG.

4 helical membrane passes run 42-62 (NVAL…QLVF), 66-86 (WATV…VTGG), 187-207 (LPLV…VLWG), and 210-230 (AFIA…HATW).

The protein belongs to the fatty acid desaturase type 1 family. As to expression, expressed in the intestine in adult worms and in all four larval stages. Additional expression in the pharynx and tail cells after hatching and throughout the lifespan.

Its subcellular location is the membrane. It catalyses the reaction hexadecanoyl-CoA + 2 Fe(II)-[cytochrome b5] + O2 + 2 H(+) = (9Z)-hexadecenoyl-CoA + 2 Fe(III)-[cytochrome b5] + 2 H2O. The catalysed reaction is tetradecanoyl-CoA + 2 Fe(II)-[cytochrome b5] + O2 + 2 H(+) = (9Z)-tetradecenoyl-CoA + 2 Fe(III)-[cytochrome b5] + 2 H2O. It carries out the reaction heptadecanoyl-CoA + 2 Fe(II)-[cytochrome b5] + O2 + 2 H(+) = (9Z)-heptadecenoyl-CoA + 2 Fe(III)-[cytochrome b5] + 2 H2O. The enzyme catalyses pentadecanoyl-CoA + 2 Fe(II)-[cytochrome b5] + O2 + 2 H(+) = (9Z)-pentadecenoyl-CoA + 2 Fe(III)-[cytochrome b5] + 2 H2O. Its pathway is lipid metabolism; monounsaturated fatty acid biosynthesis. Functionally, delta(9)-fatty acid desaturase that acts preferentially on palmitoyl-CoA (hexadecanoyl-CoA) producing the monounsaturated palmitoleoyl-CoA ((9Z)-hexadecenoyl-CoA), which can be elongated to (11Z)-octadecenoyl-CoA (the most abundant monounsaturated fatty acid in Caenorhabditis elegans phospholipids and triacylglycerols). Also acts on pentadecanoyl-CoA, heptadecanoyl-CoA and myristoyl-CoA (tetradecanoyl-CoA), the monounsaturated fatty acids (MUFAs) produced are further used as substrates to synthesize polyunsaturated fatty acids (PUFAs) by several other desaturases and elongases. Unlike plants, Caenorhabditis elegans desaturases seem to use fatty acyl-CoAs as substrates. The protein is Delta(9)-fatty-acid desaturase fat-5 (fat-5) of Caenorhabditis elegans.